The chain runs to 289 residues: Glycine--tRNA ligase alpha subunit (289 aa).

The protein belongs to the class-II aminoacyl-tRNA synthetase family. Tetramer of two alpha and two beta subunits.

The protein resides in the cytoplasm. The catalysed reaction is tRNA(Gly) + glycine + ATP = glycyl-tRNA(Gly) + AMP + diphosphate. The sequence is that of Glycine--tRNA ligase alpha subunit from Rickettsia typhi (strain ATCC VR-144 / Wilmington).